Consider the following 141-residue polypeptide: Lutropin subunit beta (141 aa).

A signal peptide spans 1–22 (MERYQELTVLLLLLLLEGGSWG). 6 disulfides stabilise this stretch: C30–C78, C44–C93, C47–C131, C55–C109, C59–C111, and C114–C121. N34 is a glycosylation site (N-linked (GlcNAc...) asparagine).

This sequence belongs to the glycoprotein hormones subunit beta family. In terms of assembly, heterodimer of a common alpha chain and a unique beta chain which confers biological specificity to thyrotropin, lutropin, follitropin and gonadotropin.

The protein localises to the secreted. Its function is as follows. Promotes spermatogenesis and ovulation by stimulating the testes and ovaries to synthesize steroids. In Trichosurus vulpecula (Brush-tailed possum), this protein is Lutropin subunit beta (LHB).